We begin with the raw amino-acid sequence, 133 residues long: ATP synthase epsilon chain (133 aa).

It belongs to the ATPase epsilon chain family. As to quaternary structure, F-type ATPases have 2 components, CF(1) - the catalytic core - and CF(0) - the membrane proton channel. CF(1) has five subunits: alpha(3), beta(3), gamma(1), delta(1), epsilon(1). CF(0) has three main subunits: a, b and c.

It is found in the cell membrane. Functionally, produces ATP from ADP in the presence of a proton gradient across the membrane. This chain is ATP synthase epsilon chain, found in Bacillus mycoides (strain KBAB4) (Bacillus weihenstephanensis).